We begin with the raw amino-acid sequence, 497 residues long: MEGVGGGGGGEEWLRPMDAEQLRECGHRMVDFVADYYKSIEAFPVLSQVQPGYLKEVLPDSAPRQPDTLDSLFDDIQQKIIPGVTHWQSPNYFAYYPSNSSTAGFLGEMLSAAFNIVGFSWITSPAATELEVIVLDWFAKMLQLPSQFLSTALGGGVIQGTASEAVLVALLAARDRALKKHGKHSLEKLVVYASDQTHSALQKACQIAGIFSENVRVVIADCNKNYAVAPEAVSEALSIDLSSGLIPFFICATVGTTSSSAVDPLPELGQIAKSNDMWFHIDAAYAGSACICPEYRHHLNGVEEADSFNMNAHKWFLTNFDCSLLWVKDRSFLIQSLSTNPEFLKNKASQANSVVDFKDWQIPLGRRFRSLKLWMVLRLYGVDNLQSYIRKHIHLAEHFEQLLLSDSRFEVVTPRTFSLVCFRLVPPTSDHENGRKLNYDMMDGVNSSGKIFLSHTVLSGKFVLRFAVGAPLTEERHVDAAWKLLRDEATKVLGKMV.

The pyridoxal 5'-phosphate site is built by Ala-162, Ser-163, Thr-257, and Asn-311. Lys-314 is modified (N6-(pyridoxal phosphate)lysine).

The protein belongs to the group II decarboxylase family. It depends on pyridoxal 5'-phosphate as a cofactor.

The enzyme catalyses L-tryptophan + H(+) = tryptamine + CO2. Functionally, involved in serotonin biosynthesis. Catalyzes the decarboxylation of L-tryptophan to tryptamine, which is converted to serotonin by tryptamine 5-hydroxylase. May play a minor role in serotonin biosynthetis during senescence. Accumulation of serotonin attenuates leaf senescence. This Oryza sativa subsp. japonica (Rice) protein is Tryptophan decarboxylase 2.